We begin with the raw amino-acid sequence, 279 residues long: Putative pyruvate, phosphate dikinase regulatory protein (279 aa).

154–161 (GVSRTSKT) lines the ADP pocket.

It belongs to the pyruvate, phosphate/water dikinase regulatory protein family. PDRP subfamily.

It carries out the reaction N(tele)-phospho-L-histidyl/L-threonyl-[pyruvate, phosphate dikinase] + ADP = N(tele)-phospho-L-histidyl/O-phospho-L-threonyl-[pyruvate, phosphate dikinase] + AMP + H(+). It catalyses the reaction N(tele)-phospho-L-histidyl/O-phospho-L-threonyl-[pyruvate, phosphate dikinase] + phosphate + H(+) = N(tele)-phospho-L-histidyl/L-threonyl-[pyruvate, phosphate dikinase] + diphosphate. Functionally, bifunctional serine/threonine kinase and phosphorylase involved in the regulation of the pyruvate, phosphate dikinase (PPDK) by catalyzing its phosphorylation/dephosphorylation. The sequence is that of Putative pyruvate, phosphate dikinase regulatory protein from Rhodopseudomonas palustris (strain BisB18).